Here is a 397-residue protein sequence, read N- to C-terminus: MEIGTPLFEGAKKLLWLGGGELGKEMVIEAQRMGIETVVVDRYDMAPAMHVAHRKYVVNMLDGNAIKSIIKKENPDAIITEIEAINTDALLELESEGYKVIPNAKAVKICMNRIELRKLAAEKVKVPTTQYGFAENPEEVKKICKDIGYPCIIKPEMSSSGHGHEVVYNESEVEQKFKEAITHARGKSEQVIVEEYVKIDRELTVLTYRYLDDKGVVTKTITPIEHQRPSDVYYYVESWHPSTVDKDIIERAQEYATRVVNELGGFGIFGVEIIVSGNRVLFSEVSPRPHDTGLVTMASLDINEFQIHVRSALGLPTPEVKIVSPAAAHVILANNEGWAPKFLNVEKALQIPGVQIRLFGKPSTYYKRRMGVVLATGNTVEEAKEKARKAASLVLVT.

Residues 21 to 22 (EL) and Glu-81 contribute to the N(1)-(5-phospho-beta-D-ribosyl)glycinamide site. ATP contacts are provided by residues Arg-113, Lys-154, 194 to 197 (EEYV), and Glu-202. The ATP-grasp domain occupies 118–313 (KLAAEKVKVP…EFQIHVRSAL (196 aa)). Mg(2+) contacts are provided by Glu-272 and Glu-284. N(1)-(5-phospho-beta-D-ribosyl)glycinamide contacts are provided by residues Asp-291, Lys-361, and 368–369 (RR).

It belongs to the PurK/PurT family. Homodimer.

It carries out the reaction N(1)-(5-phospho-beta-D-ribosyl)glycinamide + formate + ATP = N(2)-formyl-N(1)-(5-phospho-beta-D-ribosyl)glycinamide + ADP + phosphate + H(+). The protein operates within purine metabolism; IMP biosynthesis via de novo pathway; N(2)-formyl-N(1)-(5-phospho-D-ribosyl)glycinamide from N(1)-(5-phospho-D-ribosyl)glycinamide (formate route): step 1/1. Functionally, involved in the de novo purine biosynthesis. Catalyzes the transfer of formate to 5-phospho-ribosyl-glycinamide (GAR), producing 5-phospho-ribosyl-N-formylglycinamide (FGAR). Formate is provided by PurU via hydrolysis of 10-formyl-tetrahydrofolate. The polypeptide is Formate-dependent phosphoribosylglycinamide formyltransferase (Sulfurisphaera tokodaii (strain DSM 16993 / JCM 10545 / NBRC 100140 / 7) (Sulfolobus tokodaii)).